A 291-amino-acid polypeptide reads, in one-letter code: ATP synthase gamma chain (291 aa).

Belongs to the ATPase gamma chain family. F-type ATPases have 2 components, CF(1) - the catalytic core - and CF(0) - the membrane proton channel. CF(1) has five subunits: alpha(3), beta(3), gamma(1), delta(1), epsilon(1). CF(0) has three main subunits: a, b and c.

Its subcellular location is the cell inner membrane. Produces ATP from ADP in the presence of a proton gradient across the membrane. The gamma chain is believed to be important in regulating ATPase activity and the flow of protons through the CF(0) complex. The chain is ATP synthase gamma chain from Rhodopseudomonas palustris (strain ATCC BAA-98 / CGA009).